Here is a 455-residue protein sequence, read N- to C-terminus: Bifunctional protein GlmU (455 aa).

Positions 1-230 are pyrophosphorylase; sequence MANRFAVILA…FDETIGINDR (230 aa). Residues 9–12, Lys-23, Gln-73, and 78–79 each bind UDP-N-acetyl-alpha-D-glucosamine; these read LAAG and GT. Asp-103 serves as a coordination point for Mg(2+). UDP-N-acetyl-alpha-D-glucosamine contacts are provided by Gly-140, Glu-155, Asn-170, and Asn-228. Mg(2+) is bound at residue Asn-228. The linker stretch occupies residues 231–251; sequence IALAEAEKIMKKRINEQHMRN. Positions 252 to 455 are N-acetyltransferase; that stretch reads GVSIIDPEQT…KEEYASKFKK (204 aa). UDP-N-acetyl-alpha-D-glucosamine is bound by residues Arg-333 and Lys-351. Residue His-363 is the Proton acceptor of the active site. Positions 366 and 377 each coordinate UDP-N-acetyl-alpha-D-glucosamine. Acetyl-CoA-binding positions include 386–387, Ala-423, and Arg-440; that span reads NY.

The protein in the N-terminal section; belongs to the N-acetylglucosamine-1-phosphate uridyltransferase family. This sequence in the C-terminal section; belongs to the transferase hexapeptide repeat family. In terms of assembly, homotrimer. It depends on Mg(2+) as a cofactor.

The protein localises to the cytoplasm. It catalyses the reaction alpha-D-glucosamine 1-phosphate + acetyl-CoA = N-acetyl-alpha-D-glucosamine 1-phosphate + CoA + H(+). It carries out the reaction N-acetyl-alpha-D-glucosamine 1-phosphate + UTP + H(+) = UDP-N-acetyl-alpha-D-glucosamine + diphosphate. It functions in the pathway nucleotide-sugar biosynthesis; UDP-N-acetyl-alpha-D-glucosamine biosynthesis; N-acetyl-alpha-D-glucosamine 1-phosphate from alpha-D-glucosamine 6-phosphate (route II): step 2/2. Its pathway is nucleotide-sugar biosynthesis; UDP-N-acetyl-alpha-D-glucosamine biosynthesis; UDP-N-acetyl-alpha-D-glucosamine from N-acetyl-alpha-D-glucosamine 1-phosphate: step 1/1. The protein operates within bacterial outer membrane biogenesis; LPS lipid A biosynthesis. Functionally, catalyzes the last two sequential reactions in the de novo biosynthetic pathway for UDP-N-acetylglucosamine (UDP-GlcNAc). The C-terminal domain catalyzes the transfer of acetyl group from acetyl coenzyme A to glucosamine-1-phosphate (GlcN-1-P) to produce N-acetylglucosamine-1-phosphate (GlcNAc-1-P), which is converted into UDP-GlcNAc by the transfer of uridine 5-monophosphate (from uridine 5-triphosphate), a reaction catalyzed by the N-terminal domain. The polypeptide is Bifunctional protein GlmU (Oceanobacillus iheyensis (strain DSM 14371 / CIP 107618 / JCM 11309 / KCTC 3954 / HTE831)).